The primary structure comprises 447 residues: NADP-specific glutamate dehydrogenase (447 aa).

Substrate is bound by residues Lys92, Gln113, and Lys116. The active-site Proton donor is Lys128. Gly167 lines the substrate pocket. Residues Thr211 and Asn242 each coordinate NADP(+). A substrate-binding site is contributed by Ser380.

This sequence belongs to the Glu/Leu/Phe/Val dehydrogenases family. In terms of assembly, homohexamer.

It catalyses the reaction L-glutamate + NADP(+) + H2O = 2-oxoglutarate + NH4(+) + NADPH + H(+). Its activity is regulated as follows. Competitively inhibited by homoserine and by glutamine. In terms of biological role, catalyzes the reversible oxidative deamination of glutamate to alpha-ketoglutarate and ammonia. This is NADP-specific glutamate dehydrogenase from Escherichia coli (strain K12).